The following is a 370-amino-acid chain: Cysteine-type anaerobic sulfatase-maturating enzyme (370 aa).

Residues 1–227 (MPPLSLLIKP…LKNLFDLWYE (227 aa)) enclose the Radical SAM core domain. [4Fe-4S] cluster is bound by residues cysteine 15 and cysteine 19. Tyrosine 21 contributes to the S-adenosyl-L-methionine binding site. Cysteine 22 provides a ligand contact to [4Fe-4S] cluster. Residues glycine 66, serine 122, arginine 134, and leucine 195 each coordinate S-adenosyl-L-methionine. Residues cysteine 255, cysteine 261, and cysteine 276 each contribute to the [4Fe-4S] cluster site. Aspartate 277 serves as the catalytic Proton acceptor. Cysteine 317, cysteine 320, cysteine 326, cysteine 330, and cysteine 348 together coordinate [4Fe-4S] cluster.

This sequence belongs to the radical SAM superfamily. Anaerobic sulfatase-maturating enzyme family. It depends on [4Fe-4S] cluster as a cofactor.

The enzyme catalyses L-cysteinyl-[sulfatase] + S-adenosyl-L-methionine + H2O = 3-oxo-L-alanyl-[sulfatase] + hydrogen sulfide + 5'-deoxyadenosine + L-methionine + 2 H(+). It functions in the pathway protein modification; sulfatase oxidation. Its function is as follows. Involved in 'Cys-type' sulfatase maturation under anaerobic conditions. Catalyzes the post-translational modification of cysteine into 3-oxoalanine (also known as C(alpha)-formylglycine (FGly)), by a free radical chemical mechanism initiated via the reductive cleavage of S-adenosyl-L-methionine (SAM). This is Cysteine-type anaerobic sulfatase-maturating enzyme from Clostridium perfringens (strain 13 / Type A).